The sequence spans 538 residues: Frizzled-4 (538 aa).

The N-terminal stretch at 1-37 (MAWQGTGPSVRGMPGGVRLRLGLLLLQLLLLQRPALG) is a signal peptide. Residues 38-213 (FGDEEERRCD…KCGYDAGLYS (176 aa)) are Extracellular-facing. One can recognise an FZ domain in the interval 41–162 (EEERRCDPIR…NDHNHMCMEG (122 aa)). 8 disulfides stabilise this stretch: Cys46/Cys107, Cys54/Cys100, Cys91/Cys129, Cys118/Cys159, Cys122/Cys146, Cys182/Cys201, Cys205/Cys283, and Cys303/Cys378. Asn60 carries N-linked (GlcNAc...) asparagine glycosylation. Asn145 is a glycosylation site (N-linked (GlcNAc...) asparagine). The chain crosses the membrane as a helical span at residues 214 to 244 (RSAKEFTDIWMAVWASLCFISTTFTVLTFLI). Residues 245–250 (DSSRFS) lie on the Cytoplasmic side of the membrane. A helical membrane pass occupies residues 251–276 (YPERPIIFLSMCYNIYSIAYIVRLTV). Residues 277 to 300 (GRERISCDFEEAAEPVLIQEGLKN) lie on the Extracellular side of the membrane. The chain crosses the membrane as a helical span at residues 301–334 (TGCAIIFLLMYFFGMASSIWWVILTLTWFLAAGL). The Cytoplasmic portion of the chain corresponds to 335-337 (KWG). The helical transmembrane segment at 338 to 366 (HEAIEMHSSYFHIAAWAIPAVKTIVILIM) threads the bilayer. At 367–384 (RLVDADELTGLCYVGNQS) the chain is on the extracellular side. Asn382 carries an N-linked (GlcNAc...) asparagine glycan. Residues 385–419 (LDALTGFVVAPLFTYLVIGTLFIAAGLVALFKIRS) traverse the membrane as a helical segment. The Cytoplasmic segment spans residues 420–432 (NLQKDGTKTDKLE). Residues 433–461 (RLMVKIGVFSVLYTVPATCVIACYFYEIS) traverse the membrane as a helical segment. Over 462-474 (NWALFRYSADDSN) the chain is Extracellular. Residues 475–496 (MAVEMLKIFMSLLVGITSGMWI) traverse the membrane as a helical segment. The Cytoplasmic portion of the chain corresponds to 497-538 (WSAKTLHTWQKCSNRLVNSGKVKREKRGNGWVKPGKGNETVV). The Lys-Thr-X-X-X-Trp motif, mediates interaction with the PDZ domain of Dvl family members motif lies at 500–505 (KTLHTW). The PDZ-binding motif lies at 536-538 (TVV).

It belongs to the G-protein coupled receptor Fz/Smo family. Interacts with MAGI3 and NDP. Component of a complex, at least composed of TSPAN12, FZD4 and norrin (NDP). Interacts (via FZ domain) with TSKU; TSKU competes with WNT2B for binding to FZD4, inhibiting Wnt signaling and repressing peripheral eye development. Interacts with glypican GPC3. Post-translationally, ubiquitinated by ZNRF3, leading to its degradation by the proteasome.

The protein resides in the cell membrane. Functionally, receptor for Wnt proteins. Most of frizzled receptors are coupled to the beta-catenin (CTNNB1) canonical signaling pathway, which leads to the activation of disheveled proteins, inhibition of GSK-3 kinase, nuclear accumulation of beta-catenin (CTNNB1) and activation of Wnt target genes. Plays a critical role in retinal vascularization by acting as a receptor for Wnt proteins and norrin (NDP). In retina, it can be both activated by Wnt protein-binding, but also by a Wnt-independent signaling via binding of norrin (NDP), promoting in both cases beta-catenin (CTNNB1) accumulation and stimulation of LEF/TCF-mediated transcriptional programs. A second signaling pathway involving PKC and calcium fluxes has been seen for some family members, but it is not yet clear if it represents a distinct pathway or if it can be integrated in the canonical pathway, as PKC seems to be required for Wnt-mediated inactivation of GSK-3 kinase. Both pathways seem to involve interactions with G-proteins. May be involved in transduction and intercellular transmission of polarity information during tissue morphogenesis and/or in differentiated tissues. This Rattus norvegicus (Rat) protein is Frizzled-4 (Fzd4).